The primary structure comprises 310 residues: Forkhead box protein pes-1 (310 aa).

The segment covering 1–16 (MLPLSISTSPDPASQF) has biased composition (polar residues). 4 disordered regions span residues 1 to 37 (MLPL…GTAK), 58 to 77 (VSPS…SPAP), 92 to 126 (KQSS…SNPN), and 217 to 242 (SLRR…PNPI). Positions 17 to 35 (PTVPDLPTLTPTPSPTSGT) are enriched in low complexity. A DNA-binding region (fork-head) is located at residues 128-220 (RPAYSYNALI…IGKDCGSLRR (93 aa)). The span at 218–231 (LRRKKNGKPRKYSK) shows a compositional bias: basic residues.

It localises to the nucleus. The protein localises to the cytoplasm. Functionally, transcription factor. Plays a role in embryogenesis and later development, perhaps acting redundantly with forkhead protein fkh-2. This Caenorhabditis briggsae protein is Forkhead box protein pes-1.